Reading from the N-terminus, the 431-residue chain is MQSLTTALENLLRHLSQEIPATPGIRVIDIPFPLKDAFDALSWLASQQTYPQFYWQQRNGDEEAVVLGAITRFTSLDQAQRFLRQHPEHADLRIWGLNAFDPSQGNLLLPRLEWRRCGGKATLRLTLFSESSLQHDAIQAKEFIATLVSIKPLPGLHLTTTREQHWPDKTGWTQLIELATKTIAEGELDKVVLARATDLHFASPVNAAAMMAASRRLNLNCYHFYMAFDGENAFLGSSPERLWRRRDKALRTEALAGTVANNPDDKQAQQLGEWLMADDKNQRENMLVVEDICQRLQADTQTLDVLPPQVLRLRKVQHLRRCIWTSLNKADDVICLHQLQPTAAVAGLPRDLARQFIARHEPFTREWYAGSAGYLSLQQSEFCVSLRSAKISGNVVRLYAGAGIVRGSDPEQEWQEIDNKAAGLRTLLQME.

K190 acts as the Proton acceptor in catalysis. The active-site Proton donor is E240. E284 and E416 together coordinate Mg(2+).

The protein belongs to the isochorismate synthase family. As to quaternary structure, homodimer. Mg(2+) is required as a cofactor.

It carries out the reaction chorismate = isochorismate. The protein operates within quinol/quinone metabolism; 1,4-dihydroxy-2-naphthoate biosynthesis; 1,4-dihydroxy-2-naphthoate from chorismate: step 1/7. Its pathway is quinol/quinone metabolism; menaquinone biosynthesis. Functionally, catalyzes the conversion of chorismate to isochorismate. Can also catalyze the reverse reaction, but with a lower efficiency. The protein is Isochorismate synthase MenF of Escherichia coli (strain K12).